Reading from the N-terminus, the 95-residue chain is Aspartyl/glutamyl-tRNA(Asn/Gln) amidotransferase subunit C (95 aa).

This sequence belongs to the GatC family. In terms of assembly, heterotrimer of A, B and C subunits.

It carries out the reaction L-glutamyl-tRNA(Gln) + L-glutamine + ATP + H2O = L-glutaminyl-tRNA(Gln) + L-glutamate + ADP + phosphate + H(+). The catalysed reaction is L-aspartyl-tRNA(Asn) + L-glutamine + ATP + H2O = L-asparaginyl-tRNA(Asn) + L-glutamate + ADP + phosphate + 2 H(+). Its function is as follows. Allows the formation of correctly charged Asn-tRNA(Asn) or Gln-tRNA(Gln) through the transamidation of misacylated Asp-tRNA(Asn) or Glu-tRNA(Gln) in organisms which lack either or both of asparaginyl-tRNA or glutaminyl-tRNA synthetases. The reaction takes place in the presence of glutamine and ATP through an activated phospho-Asp-tRNA(Asn) or phospho-Glu-tRNA(Gln). The polypeptide is Aspartyl/glutamyl-tRNA(Asn/Gln) amidotransferase subunit C (Thermoanaerobacter pseudethanolicus (strain ATCC 33223 / 39E) (Clostridium thermohydrosulfuricum)).